Consider the following 919-residue polypeptide: Aminodeoxychorismate synthase, chloroplastic (919 aa).

Residues 1–45 constitute a chloroplast transit peptide; it reads MNMNFSFCSTSSELSYPSENVLRFSVASRLFSPKWKKSFISLPCR. The Glutamine amidotransferase type-1 domain occupies 86 to 342; that stretch reads RTLLIDNYDS…KDITVNYWSR (257 aa). Catalysis depends on Cys172, which acts as the Nucleophile. Active-site residues include His316 and Glu318. The tract at residues 436–910 is PABB component; sequence IFMELFGKNR…KTRAPANAVM (475 aa).

It in the C-terminal section; belongs to the anthranilate synthase component I family.

It localises to the plastid. The protein localises to the chloroplast. It catalyses the reaction chorismate + L-glutamine = 4-amino-4-deoxychorismate + L-glutamate. It functions in the pathway cofactor biosynthesis; tetrahydrofolate biosynthesis; 4-aminobenzoate from chorismate: step 1/2. Activated by chorismate and inhibited by dihydrofolate and methotrexate. Its function is as follows. Bifunctional enzyme that catalyzes the biosynthesis of 4-amino-4-deoxychorismate (ADC) from chorismate and glutamine. In the first step, a glutamine amidotransferase generates ammonia that is channelled between the binding sites of glutamine and chorismate and used along with chorismate in the second step, catalyzed by aminodeoxychorismate synthase, to produce ADC. Required for the synthesis of 4-aminobenzoate (PABA), an important component in tetrahydrofolate biosynthesis. Does not possess ADC lyase activity. This Arabidopsis thaliana (Mouse-ear cress) protein is Aminodeoxychorismate synthase, chloroplastic (ADCS).